Consider the following 160-residue polypeptide: Deoxyuridine 5'-triphosphate nucleotidohydrolase (160 aa).

Residues 79-81 (RSG), N92, 96-98 (TVD), and K106 each bind substrate.

This sequence belongs to the dUTPase family. Mg(2+) is required as a cofactor.

The catalysed reaction is dUTP + H2O = dUMP + diphosphate + H(+). The protein operates within pyrimidine metabolism; dUMP biosynthesis; dUMP from dCTP (dUTP route): step 2/2. Its function is as follows. This enzyme is involved in nucleotide metabolism: it produces dUMP, the immediate precursor of thymidine nucleotides and it decreases the intracellular concentration of dUTP so that uracil cannot be incorporated into DNA. The sequence is that of Deoxyuridine 5'-triphosphate nucleotidohydrolase from Rhizobium meliloti (strain 1021) (Ensifer meliloti).